Consider the following 145-residue polypeptide: uncharacterized protein (145 aa).

Positions Met-1–Gly-26 are cleaved as a signal peptide.

This is an uncharacterized protein from Saccharomyces cerevisiae (strain ATCC 204508 / S288c) (Baker's yeast).